We begin with the raw amino-acid sequence, 904 residues long: MAMNLKNSSSGGNLTSSPSYNSFSSLNLSGNSFNNGSGSGSGSGSGSNEYIPLCFSKDVFTSNTFEVDQFISDCRKRVNLESVQKDLREYSKHLDSELIELINKEYQSFFSLSTSLVGFDTILNEFSISQSSIKSEIKSFNNEIVKVRGLVEDKLNEKKSIEQKKKLLQLYISISETLNNMNHLFDQLYQLTHPNDFKKINNNNNNHTNNETNINDGDVLELLIDRISNSFYQIQNQMSSLTNDELKFNIFQSLSLKIMDLSNKIEEKVEPIFKESLKRFINVNNNNKEIVDDNNEKQNKYDERILLVCLKTFQTIDKLNVPYKLFKTLIVKPRLAQIVSLRNLEINKSTTDGLSQIYNSIIEFLKNQCSSFFDISNLINNNLKEKQSNNNNNNNNNNNNNNNNNNNNQINNNSNNNNNNINNNNINNNYNNNIILYNNYNFISQSVLPEIDESLGFFKQIFATGIPDLFYKNYYLTFNFIQSIEVNFLTNKELLTQFRQSSSYSSLWKKWNFAVYFQLCFTNIAQHFEFNYLRIPLFDQLTLPTNNITNNNNNNNENNNEFYLKSTDGLRLSMDKCWSNSNFIFDLSSKFFKLFLQLIARYDTFISDTLIPLELELQQQLQQQQLQQQQQQQQQQQNIGDSVIKITPKSPPSLSNQSPISSSTTLNNKQSSPENFIYIISDIYKIKSKISTNYKELIIKTIGNHQNQHEILNLINDGILESCKTLEQLIPRISIIIENHLISKCLEPIEIISTLRSTYRMTNKPVPTKPSIYVSNLISPLEILINNKASSLHFIPPEIKLNWAISVLTPVTESFKNAATNLIQSVTQSNDIINKMVKKSKPTTTTSGGDMSDMDKISLQLYLDVDKFGLYIQKFGINLLTFEPFLGLKSIVEPFKKLILNQNK.

Disordered stretches follow at residues 384–424 (KEKQ…INNN) and 644–669 (IKIT…LNNK). Composition is skewed to low complexity over residues 388 to 424 (SNNN…INNN) and 652 to 663 (PSLSNQSPISSS).

This sequence belongs to the COG2 family. Component of the conserved oligomeric Golgi complex which is composed of eight different subunits and is required for normal Golgi morphology and localization.

The protein localises to the golgi apparatus membrane. In terms of biological role, required for normal Golgi function. The polypeptide is Conserved oligomeric Golgi complex subunit 2 (cog2) (Dictyostelium discoideum (Social amoeba)).